Reading from the N-terminus, the 1066-residue chain is Kinesin-like protein Klp61F (1066 aa).

The 338-residue stretch at 19–356 (NIQVYVRVRP…LEYAHRAKNI (338 aa)) folds into the Kinesin motor domain. 103–110 (GQTGTGKT) is a binding site for ATP. A coiled-coil region spans residues 362–462 (VNQKLTKKTV…KTEENLLNTK (101 aa)). Phosphothreonine is present on Thr520. 4 coiled-coil regions span residues 540-569 (DRMQ…QLSQ), 639-738 (LMSK…QIKN), 808-875 (CSML…LITE), and 889-918 (DLVQ…ELVR). Thr933 carries the phosphothreonine modification. Phosphoserine is present on Ser949. Residues 990 to 1002 (ELSETETIMNSTP) show a composition bias toward polar residues. 2 disordered regions span residues 990–1009 (ELSE…VDGV) and 1016–1066 (GTTR…ENVA). Low complexity predominate over residues 1033 to 1051 (GGKRSSSLSRSLTPSKTSP). Ser1043 is modified (phosphoserine). Position 1045 is a phosphothreonine (Thr1045). Residues Ser1050 and Ser1054 each carry the phosphoserine modification.

The protein belongs to the TRAFAC class myosin-kinesin ATPase superfamily. Kinesin family. BimC subfamily. Homotetramer. Consists of two pairs of polypeptides associated by coiled-coil interactions to form two homodimers. The homodimers are linked by lateral interactions between their coiled-coil regions to form a bipolar homotetramer consisting of a central rod with two motor domains projecting from either end. Parallel coiled coils extend from each pair of motor heads, switch to two antiparallel coiled coils in the central region and then back to parallel coiled coils. Interacts with Wee1. Post-translationally, phosphorylation is required for localization to mitotic spindles. Phosphorylation of Thr-933 during mitosis controls association with the spindle apparatus. Phosphorylated in vitro by Wee1.

It localises to the cytoplasm. The protein resides in the cytoskeleton. The protein localises to the spindle. Its subcellular location is the spindle pole. Important role in mitotic dividing cells. Microtubule motor required for spindle body separation. Slow plus-end directed microtubule motor capable of cross-linking and sliding apart antiparallel microtubules, thereby pushing apart the associated spindle poles during spindle assembly and function. Forms cross-links between microtubules within interpolar microtubule bundles. Contributes to the length of the metaphase spindle, maintains the prometaphase spindle by antagonizing Ncd, drives anaphase B, and also contributes to normal chromosome congression, kinetochore spacing, and anaphase A rates. Displays microtubule-stimulated ATPase activity. Required for normal fusome organization. Required in non-mitotic cells for transport of secretory proteins from the Golgi complex to the cell surface. The polypeptide is Kinesin-like protein Klp61F (Drosophila melanogaster (Fruit fly)).